The primary structure comprises 392 residues: Galactokinase (392 aa).

Alpha-D-galactose-binding residues include arginine 37, glutamate 43, histidine 44, and aspartate 46. 4 residues coordinate ATP: glycine 136, glycine 138, serine 140, and serine 141. Aspartate 186 is a binding site for alpha-D-galactose. Catalysis depends on aspartate 186, which acts as the Proton acceptor. Serine 230 carries the phosphoserine modification. Residue tyrosine 236 coordinates alpha-D-galactose.

The protein belongs to the GHMP kinase family. GalK subfamily. In terms of assembly, homodimer.

The enzyme catalyses alpha-D-galactose + ATP = alpha-D-galactose 1-phosphate + ADP + H(+). The protein operates within carbohydrate metabolism; galactose metabolism. In terms of biological role, catalyzes the transfer of a phosphate from ATP to alpha-D-galactose and participates in the first committed step in the catabolism of galactose. In Homo sapiens (Human), this protein is Galactokinase.